The sequence spans 111 residues: MIQVLLVTICLAVFPYQGSSIILESGNVNDYEVVYPRKITPLPKGAVQPKNPCCDAATCKLTPGAQCAEGLCCDQCKFIKAGKICRRARGDNPDYRCTGQSGDCPRKHFYA.

An N-terminal signal peptide occupies residues 1–20 (MIQVLLVTICLAVFPYQGSS). The propeptide occupies 21 to 44 (IILESGNVNDYEVVYPRKITPLPK). The Disintegrin domain occupies 45-111 (GAVQPKNPCC…GDCPRKHFYA (67 aa)). Cystine bridges form between Cys-53–Cys-76, Cys-67–Cys-73, Cys-72–Cys-97, and Cys-85–Cys-104. Positions 89-91 (RGD) match the Cell attachment site motif. A propeptide spanning residues 110–111 (YA) is cleaved from the precursor.

The protein belongs to the disintegrin family. Dimeric disintegrin subfamily. As to quaternary structure, heterodimer with subunit beta; disulfide-linked. As to expression, expressed by the venom gland.

It is found in the secreted. In terms of biological role, acts by binding to alpha-IIb/beta-3 (ITGA2B/ITGB3) on the platelet surface and inhibits both ADP-induced platelet aggregation and platelet aggregate dissociation in human platelet-rich plasma. This is Disintegrin subunit alpha from Agkistrodon piscivorus leucostoma (Western cottonmouth).